Consider the following 332-residue polypeptide: Anthranilate phosphoribosyltransferase (332 aa).

Residues glycine 79, 82–83, serine 87, 89–92, 107–115, and serine 119 contribute to the 5-phospho-alpha-D-ribose 1-diphosphate site; these read GD, NIST, and KHGNRSVSS. Glycine 79 provides a ligand contact to anthranilate. Residue serine 91 participates in Mg(2+) binding. Asparagine 110 is an anthranilate binding site. Arginine 165 is a binding site for anthranilate. The Mg(2+) site is built by aspartate 223 and glutamate 224.

This sequence belongs to the anthranilate phosphoribosyltransferase family. As to quaternary structure, homodimer. Mg(2+) serves as cofactor.

It carries out the reaction N-(5-phospho-beta-D-ribosyl)anthranilate + diphosphate = 5-phospho-alpha-D-ribose 1-diphosphate + anthranilate. Its pathway is amino-acid biosynthesis; L-tryptophan biosynthesis; L-tryptophan from chorismate: step 2/5. In terms of biological role, catalyzes the transfer of the phosphoribosyl group of 5-phosphorylribose-1-pyrophosphate (PRPP) to anthranilate to yield N-(5'-phosphoribosyl)-anthranilate (PRA). This Serratia proteamaculans (strain 568) protein is Anthranilate phosphoribosyltransferase.